The primary structure comprises 356 residues: MTRMDHRSIISDTTQYFESNEPLQLELGGELPGVRVAYRTWGTLNAEKSNVILVCHALTGNADADSWWCGMFGEGRAFDETRDFIVCSNVLGSCYGTTGPMSVNPLSGRHYGPDFPRITIRDMVNVQRLLLRSLGIDRIRLIVGASLGGMQVLEWGAMYPEMAGALMPMGVSGRHSAWCIAQSEAQRQAIAADAEWQDGWYDPEVQPRKGLAAARMMAMCTYRCFENYQQRFGRKQREDGLFEAESYVRHQGDKLVGRFDANTYITLTRAMDMHDLGRGRDSYEAALGALKMPVEILSIDSDVLYPRQEQEELARLIPGSRLLFLDEPYGHDAFLIDTETVSRMVCEFKRQLIVDN.

Residues 50-335 enclose the AB hydrolase-1 domain; the sequence is NVILVCHALT…DEPYGHDAFL (286 aa). Serine 146 acts as the Nucleophile in catalysis. Arginine 215 provides a ligand contact to substrate. Catalysis depends on residues aspartate 302 and histidine 331. Residue aspartate 332 coordinates substrate.

Belongs to the AB hydrolase superfamily. MetX family. As to quaternary structure, homodimer.

It localises to the cytoplasm. The enzyme catalyses L-homoserine + acetyl-CoA = O-acetyl-L-homoserine + CoA. The protein operates within amino-acid biosynthesis; L-methionine biosynthesis via de novo pathway; O-acetyl-L-homoserine from L-homoserine: step 1/1. Its function is as follows. Transfers an acetyl group from acetyl-CoA to L-homoserine, forming acetyl-L-homoserine. This is Homoserine O-acetyltransferase from Chlorobaculum tepidum (strain ATCC 49652 / DSM 12025 / NBRC 103806 / TLS) (Chlorobium tepidum).